Reading from the N-terminus, the 60-residue chain is Large ribosomal subunit protein bL32 (60 aa).

It belongs to the bacterial ribosomal protein bL32 family.

The sequence is that of Large ribosomal subunit protein bL32 from Desulfovibrio desulfuricans (strain ATCC 27774 / DSM 6949 / MB).